Consider the following 84-residue polypeptide: Small ribosomal subunit protein bS20 (84 aa).

This sequence belongs to the bacterial ribosomal protein bS20 family.

Functionally, binds directly to 16S ribosomal RNA. The protein is Small ribosomal subunit protein bS20 of Phocaeicola vulgatus (strain ATCC 8482 / DSM 1447 / JCM 5826 / CCUG 4940 / NBRC 14291 / NCTC 11154) (Bacteroides vulgatus).